Consider the following 455-residue polypeptide: Bifunctional protein GlmU (455 aa).

Residues 1 to 226 (MGLSVVILAA…EFEILGVNDR (226 aa)) are pyrophosphorylase. UDP-N-acetyl-alpha-D-glucosamine-binding positions include 8–11 (LAAG), Lys-22, Gln-73, 78–79 (GT), 99–101 (YGD), Gly-136, Glu-151, Asn-166, and Asn-224. Position 101 (Asp-101) interacts with Mg(2+). Residue Asn-224 participates in Mg(2+) binding. A linker region spans residues 227–247 (TQLASLERVWQRNVAEKIMAK). An N-acetyltransferase region spans residues 248 to 455 (GVSIADPNRF…WQRPVKKTDK (208 aa)). 2 residues coordinate UDP-N-acetyl-alpha-D-glucosamine: Arg-330 and Lys-348. His-360 acts as the Proton acceptor in catalysis. 2 residues coordinate UDP-N-acetyl-alpha-D-glucosamine: Tyr-363 and Asn-374. Acetyl-CoA is bound by residues Ala-377, 383-384 (NY), Ser-402, Ala-420, and Arg-437.

The protein in the N-terminal section; belongs to the N-acetylglucosamine-1-phosphate uridyltransferase family. In the C-terminal section; belongs to the transferase hexapeptide repeat family. As to quaternary structure, homotrimer. Mg(2+) serves as cofactor.

The protein localises to the cytoplasm. It carries out the reaction alpha-D-glucosamine 1-phosphate + acetyl-CoA = N-acetyl-alpha-D-glucosamine 1-phosphate + CoA + H(+). The catalysed reaction is N-acetyl-alpha-D-glucosamine 1-phosphate + UTP + H(+) = UDP-N-acetyl-alpha-D-glucosamine + diphosphate. Its pathway is nucleotide-sugar biosynthesis; UDP-N-acetyl-alpha-D-glucosamine biosynthesis; N-acetyl-alpha-D-glucosamine 1-phosphate from alpha-D-glucosamine 6-phosphate (route II): step 2/2. The protein operates within nucleotide-sugar biosynthesis; UDP-N-acetyl-alpha-D-glucosamine biosynthesis; UDP-N-acetyl-alpha-D-glucosamine from N-acetyl-alpha-D-glucosamine 1-phosphate: step 1/1. It functions in the pathway bacterial outer membrane biogenesis; LPS lipid A biosynthesis. Catalyzes the last two sequential reactions in the de novo biosynthetic pathway for UDP-N-acetylglucosamine (UDP-GlcNAc). The C-terminal domain catalyzes the transfer of acetyl group from acetyl coenzyme A to glucosamine-1-phosphate (GlcN-1-P) to produce N-acetylglucosamine-1-phosphate (GlcNAc-1-P), which is converted into UDP-GlcNAc by the transfer of uridine 5-monophosphate (from uridine 5-triphosphate), a reaction catalyzed by the N-terminal domain. This Francisella tularensis subsp. novicida (strain U112) protein is Bifunctional protein GlmU.